The following is a 143-amino-acid chain: Large ribosomal subunit protein uL11 (143 aa).

This sequence belongs to the universal ribosomal protein uL11 family. In terms of assembly, part of the ribosomal stalk of the 50S ribosomal subunit. Interacts with L10 and the large rRNA to form the base of the stalk. L10 forms an elongated spine to which L12 dimers bind in a sequential fashion forming a multimeric L10(L12)X complex. In terms of processing, one or more lysine residues are methylated.

Forms part of the ribosomal stalk which helps the ribosome interact with GTP-bound translation factors. The sequence is that of Large ribosomal subunit protein uL11 from Nitrosomonas eutropha (strain DSM 101675 / C91 / Nm57).